We begin with the raw amino-acid sequence, 66 residues long: MKPSLIIVTFIVVFMTISCVAADDEQETWIEKRGDCLPHLKRCKENNDCCSKKCKRRGANPEKRCR.

An N-terminal signal peptide occupies residues 1–22 (MKPSLIIVTFIVVFMTISCVAA). A propeptide spanning residues 23–31 (DDEQETWIE) is cleaved from the precursor. Disulfide bonds link Cys-36–Cys-50, Cys-43–Cys-54, and Cys-49–Cys-65. The segment at 55–57 (KRR) is essential for stimulation of [3H]ryanodine binding to RYR1.

The protein belongs to the scorpion calcin family. As to expression, expressed by the venom gland.

It localises to the secreted. In terms of biological role, this toxin stabilizes ryanodine receptor 1 (RyR1) opening in a long-lasting subconductance state (40% of the full conductance state). Furthermore, it triggers calcium release from sarcoplasmic vesicles (64.2 nM are enough to induce a sharp release, and 50% of the total calcium is released after toxin (100 nM) addition) probably by acting as a cell-penetrating peptide (CPP). In addition, it has been shown to dose-dependently stimulate ryanodine binding to RyR1 (EC(50)=3.2 nM). It also augments the bell-shaped calcium-[3H]ryanodine binding curve that is maximal at about 10 uM calcium concentration. It binds a different site as ryanodine. It acts synergistically with caffeine. In vivo, intracerebroventricular injection into mice induces neurotoxic symptoms, followed by death. In Opistophthalmus carinatus (African yellow leg scorpion), this protein is Opicalcin-2.